The chain runs to 112 residues: Nucleoid-associated protein Pfl01_1806 (112 aa).

It belongs to the YbaB/EbfC family. Homodimer.

The protein localises to the cytoplasm. The protein resides in the nucleoid. Its function is as follows. Binds to DNA and alters its conformation. May be involved in regulation of gene expression, nucleoid organization and DNA protection. This chain is Nucleoid-associated protein Pfl01_1806, found in Pseudomonas fluorescens (strain Pf0-1).